A 199-amino-acid polypeptide reads, in one-letter code: Alkyl hydroperoxide reductase C (199 aa).

The region spanning 2 to 163 is the Thioredoxin domain; sequence VLVTYPAPDF…TLRMIDALHF (162 aa). Catalysis depends on Cys50, which acts as the Cysteine sulfenic acid (-SOH) intermediate.

It belongs to the peroxiredoxin family. AhpC/Prx1 subfamily. As to quaternary structure, homodimer; disulfide-linked, upon oxidation. 5 homodimers assemble to form a ring-like decamer.

The protein resides in the cytoplasm. The enzyme catalyses a hydroperoxide + NADH + H(+) = an alcohol + NAD(+) + H2O. In terms of biological role, thiol-specific peroxidase that catalyzes the reduction of hydrogen peroxide and organic hydroperoxides to water and alcohols, respectively. Plays a role in cell protection against oxidative stress by detoxifying peroxides. The chain is Alkyl hydroperoxide reductase C from Buchnera aphidicola subsp. Baizongia pistaciae (strain Bp).